A 438-amino-acid polypeptide reads, in one-letter code: Acid phosphatase type 7 (438 aa).

An N-terminal signal peptide occupies residues Met-1–Gly-26. Residues Asp-141, Asp-170, and Tyr-173 each coordinate Fe cation. Asp-170 contributes to the Zn(2+) binding site. Asn-205 lines the Zn(2+) pocket. Asn-211 carries an N-linked (GlcNAc...) asparagine glycan. His-286 and His-333 together coordinate Zn(2+). His-335 contributes to the Fe cation binding site. N-linked (GlcNAc...) asparagine glycans are attached at residues Asn-350 and Asn-404.

It belongs to the metallophosphoesterase superfamily. Purple acid phosphatase family. Fe cation serves as cofactor. Requires Zn(2+) as cofactor.

It localises to the secreted. It carries out the reaction a phosphate monoester + H2O = an alcohol + phosphate. This is Acid phosphatase type 7 from Homo sapiens (Human).